A 188-amino-acid polypeptide reads, in one-letter code: Large ribosomal subunit protein eL18 (188 aa).

Lys119 is covalently cross-linked (Glycyl lysine isopeptide (Lys-Gly) (interchain with G-Cter in SUMO2)). A Phosphoserine modification is found at Ser130. The disordered stretch occupies residues His151–Asn188. Thr158 is modified (phosphothreonine). Basic residues-rich tracts occupy residues Ser161 to Gly171 and Arg178 to Asn188. Lys164 participates in a covalent cross-link: Glycyl lysine isopeptide (Lys-Gly) (interchain with G-Cter in SUMO2).

This sequence belongs to the eukaryotic ribosomal protein eL18 family. In terms of assembly, component of the large ribosomal subunit.

It localises to the cytoplasm. The protein resides in the cytosol. The protein localises to the rough endoplasmic reticulum. Functionally, component of the large ribosomal subunit. The ribosome is a large ribonucleoprotein complex responsible for the synthesis of proteins in the cell. The sequence is that of Large ribosomal subunit protein eL18 (RPL18) from Homo sapiens (Human).